Here is a 218-residue protein sequence, read N- to C-terminus: Envelope glycoprotein L (218 aa).

The tract at residues 57–185 is interaction with gH; sequence KLVKATRLDF…LGPPPLGCFT (129 aa). The gL alphaherpesvirus-type domain maps to 60 to 218; the sequence is KATRLDFTWG…ASYYANLQKT (159 aa). 2 disulfide bridges follow: Cys81-Cys113 and Cys183-Cys206.

It belongs to the herpesviridae glycoprotein L (gL) family. Alphaherpesvirinae gL subfamily. As to quaternary structure, interacts with glycoprotein H (gH); this interaction is necessary for the correct processing and cell surface expression of gH. The heterodimer gH/gL seems to interact with gB trimers during fusion.

The protein localises to the virion membrane. The protein resides in the host cell membrane. Its subcellular location is the host Golgi apparatus. It is found in the host trans-Golgi network. Its function is as follows. The heterodimer glycoprotein H-glycoprotein L is required for the fusion of viral and plasma membranes leading to virus entry into the host cell. Acts as a functional inhibitor of gH and maintains gH in an inhibited form. Upon binding to host integrins, gL dissociates from gH leading to activation of the viral fusion glycoproteins gB and gH. This Equus caballus (Horse) protein is Envelope glycoprotein L.